A 434-amino-acid chain; its full sequence is Alpha-enolase (434 aa).

Position 40 (S40) interacts with Mg(2+). 2 residues coordinate substrate: H158 and E167. E210 functions as the Proton donor in the catalytic mechanism. Residues D245, E293, and D318 each coordinate Mg(2+). Residues E293 and D318 each contribute to the substrate site. The active-site Proton acceptor is the K343. Substrate is bound by residues 370-373 and K394; that span reads SHRS.

The protein belongs to the enolase family. As to quaternary structure, homodimer. It depends on Mg(2+) as a cofactor.

It localises to the cytoplasm. It catalyses the reaction (2R)-2-phosphoglycerate = phosphoenolpyruvate + H2O. The protein operates within carbohydrate degradation; glycolysis; pyruvate from D-glyceraldehyde 3-phosphate: step 4/5. Its function is as follows. Both an enzyme and a lens structural protein. The polypeptide is Alpha-enolase (ENO1) (Anas platyrhynchos (Mallard)).